A 369-amino-acid chain; its full sequence is MSDLEQLERQILEDIAAAVDEQGIEAVRVAALGKKGTVSEKLKTLGGMSPEERQMQGPAINGLKNRVTEALSERRTELRKAAVAARLEREKVDVTLPVRESAASRGRIHPISQVIDEITAIFADMGFSIAEGPDIETDYYNFTALNFPEGHPAREMHDTFFFNPDEKGERKLLRTHTSPVQVHTMEKFAAMRDKEGRDEPIRIVIPGKTYRMDSDATHSPMFHQVEGLVVDKSANVVNMKWVLEEFCKAFFEVPSVKMRMRPSFFPFTEPSVEVDIQCDRSGPHVKFGEGNDWLEILGCGMVHPNVLRMSGYDPEVYQGFAWGMGIDRIAMLKYGMPDLRAFFDADVRWIEHYGFRPLDIPTLFGGLSA.

Glutamate 269 provides a ligand contact to Mg(2+).

Belongs to the class-II aminoacyl-tRNA synthetase family. Phe-tRNA synthetase alpha subunit type 1 subfamily. In terms of assembly, tetramer of two alpha and two beta subunits. The cofactor is Mg(2+).

The protein localises to the cytoplasm. The catalysed reaction is tRNA(Phe) + L-phenylalanine + ATP = L-phenylalanyl-tRNA(Phe) + AMP + diphosphate + H(+). This Brucella ovis (strain ATCC 25840 / 63/290 / NCTC 10512) protein is Phenylalanine--tRNA ligase alpha subunit.